A 304-amino-acid chain; its full sequence is Non-structural maintenance of chromosomes element 3 homolog (304 aa).

Disordered regions lie at residues 1-82 (MLQK…PRSQ) and 285-304 (ALAD…APSS). The segment covering 32 to 43 (AGEDARVLRDGF) has biased composition (basic and acidic residues). A phosphoserine mark is found at Ser-57, Ser-60, and Ser-64. A compositionally biased stretch (low complexity) spans 60–80 (SQGPSPQGARRAQAAPAVGPR). An interaction with NSMCE1 region spans residues 78-304 (GPRSQKQLEL…PQPSGPAPSS (227 aa)). An MAGE domain is found at 85 to 285 (LELKVSELVQ…KDWPAQYCEA (201 aa)).

In terms of assembly, component of the SMC5-SMC6 complex which consists at least of SMC5, SMC6, NSMCE2, NSMCE1, NSMCE4A or EID3 and NSMCE3. NSMCE1, NSMCE4A or EID3 and NSMCE3 probably form a subcomplex that bridges the head domains of the SMC5:SMC6 heterodimer. Interacts with PJA1. Interacts with E2F1 (via C-terminus). Interacts with NGFR (via C-terminus). Interacts with NSMCE1. Interacts with NSMCE4. Interacts with SMC6. Interacts with EID3. Ubiquitous.

Its subcellular location is the cytoplasm. The protein resides in the nucleus. It localises to the chromosome. It is found in the telomere. In terms of biological role, component of the SMC5-SMC6 complex, a complex involved in repair of DNA double-strand breaks by homologous recombination. The complex may promote sister chromatid homologous recombination by recruiting the SMC1-SMC3 cohesin complex to double-strand breaks. The complex is required for telomere maintenance via recombination in ALT (alternative lengthening of telomeres) cell lines and mediates sumoylation of shelterin complex (telosome) components which is proposed to lead to shelterin complex disassembly in ALT-associated PML bodies (APBs). In vitro enhances ubiquitin ligase activity of NSMCE1. Proposed to act through recruitment and/or stabilization of the Ubl-conjugating enzyme (E2) at the E3:substrate complex. May be a growth suppressor that facilitates the entry of the cell into cell cycle arrest. This is Non-structural maintenance of chromosomes element 3 homolog from Homo sapiens (Human).